The chain runs to 478 residues: Adenosylhomocysteinase (478 aa).

Residues Thr56, Asp139, and Glu201 each contribute to the substrate site. Position 202 to 204 (202 to 204 (TTT)) interacts with NAD(+). 2 residues coordinate substrate: Lys231 and Asp235. NAD(+) is bound by residues Asn236, 265 to 270 (GYGDVG), Glu288, Asn323, 344 to 346 (IGH), and Asn392.

The protein belongs to the adenosylhomocysteinase family. The cofactor is NAD(+).

Its subcellular location is the cytoplasm. It catalyses the reaction S-adenosyl-L-homocysteine + H2O = L-homocysteine + adenosine. The protein operates within amino-acid biosynthesis; L-homocysteine biosynthesis; L-homocysteine from S-adenosyl-L-homocysteine: step 1/1. May play a key role in the regulation of the intracellular concentration of adenosylhomocysteine. The polypeptide is Adenosylhomocysteinase (Corynebacterium diphtheriae (strain ATCC 700971 / NCTC 13129 / Biotype gravis)).